Here is a 466-residue protein sequence, read N- to C-terminus: Adenosylhomocysteinase (466 aa).

Substrate is bound by residues threonine 57, aspartate 132, and glutamate 192. 193 to 195 (TTT) lines the NAD(+) pocket. Residues lysine 222 and aspartate 226 each contribute to the substrate site. NAD(+)-binding positions include asparagine 227, 256–261 (GYGDVG), glutamate 279, asparagine 314, 335–337 (IGH), and asparagine 380.

The protein belongs to the adenosylhomocysteinase family. The cofactor is NAD(+).

The protein resides in the cytoplasm. It carries out the reaction S-adenosyl-L-homocysteine + H2O = L-homocysteine + adenosine. Its pathway is amino-acid biosynthesis; L-homocysteine biosynthesis; L-homocysteine from S-adenosyl-L-homocysteine: step 1/1. Its function is as follows. May play a key role in the regulation of the intracellular concentration of adenosylhomocysteine. This Sinorhizobium medicae (strain WSM419) (Ensifer medicae) protein is Adenosylhomocysteinase.